A 396-amino-acid chain; its full sequence is NADH-quinone oxidoreductase subunit D 1 (396 aa).

The protein belongs to the complex I 49 kDa subunit family. In terms of assembly, NDH-1 is composed of 14 different subunits. Subunits NuoB, C, D, E, F, and G constitute the peripheral sector of the complex.

Its subcellular location is the cell inner membrane. The enzyme catalyses a quinone + NADH + 5 H(+)(in) = a quinol + NAD(+) + 4 H(+)(out). Functionally, NDH-1 shuttles electrons from NADH, via FMN and iron-sulfur (Fe-S) centers, to quinones in the respiratory chain. The immediate electron acceptor for the enzyme in this species is believed to be ubiquinone. Couples the redox reaction to proton translocation (for every two electrons transferred, four hydrogen ions are translocated across the cytoplasmic membrane), and thus conserves the redox energy in a proton gradient. The sequence is that of NADH-quinone oxidoreductase subunit D 1 from Rhizobium etli (strain ATCC 51251 / DSM 11541 / JCM 21823 / NBRC 15573 / CFN 42).